We begin with the raw amino-acid sequence, 269 residues long: Orotidine 5'-phosphate decarboxylase (269 aa).

The Proton donor role is filled by lysine 92.

The protein belongs to the OMP decarboxylase family. Type 2 subfamily.

It catalyses the reaction orotidine 5'-phosphate + H(+) = UMP + CO2. The protein operates within pyrimidine metabolism; UMP biosynthesis via de novo pathway; UMP from orotate: step 2/2. This chain is Orotidine 5'-phosphate decarboxylase, found in Natronomonas pharaonis (strain ATCC 35678 / DSM 2160 / CIP 103997 / JCM 8858 / NBRC 14720 / NCIMB 2260 / Gabara) (Halobacterium pharaonis).